Consider the following 544-residue polypeptide: uncharacterized protein (544 aa).

Residues 1–34 (MIARRMLCARPWGPSCVVCALCGALAALVPAVGA) form the signal peptide. Residues 38–69 (AVPAPGTPAPPAHTASEAVPPAPEPRAEGEQP) form a disordered region.

This sequence belongs to the TP096X family.

This is an uncharacterized protein from Treponema pallidum (strain Nichols).